Here is a 468-residue protein sequence, read N- to C-terminus: Glutamate--tRNA ligase (468 aa).

The 'HIGH' region signature appears at 10 to 20; sequence PSPTGDLHIGG. The Zn(2+) site is built by Cys99, Cys101, Cys126, and Asp128. The short motif at 236–240 is the 'KMSKS' region element; sequence RLSKR. Lys239 is an ATP binding site.

The protein belongs to the class-I aminoacyl-tRNA synthetase family. Glutamate--tRNA ligase type 1 subfamily. Monomer. It depends on Zn(2+) as a cofactor.

Its subcellular location is the cytoplasm. It carries out the reaction tRNA(Glu) + L-glutamate + ATP = L-glutamyl-tRNA(Glu) + AMP + diphosphate. Catalyzes the attachment of glutamate to tRNA(Glu) in a two-step reaction: glutamate is first activated by ATP to form Glu-AMP and then transferred to the acceptor end of tRNA(Glu). The sequence is that of Glutamate--tRNA ligase from Syntrophobacter fumaroxidans (strain DSM 10017 / MPOB).